Reading from the N-terminus, the 1141-residue chain is Myosin-binding protein C, fast-type (1141 aa).

The tract at residues 1–62 is disordered; that stretch reads MPEAKPAAKK…VFLKKPDSVS (62 aa). Residues 13 to 39 are compositionally biased toward basic and acidic residues; it reads KGKDAPKGAPKEAPPKEAPAEAPKEAP. 5 Ig-like C2-type domains span residues 50–153, 255–344, 345–437, 438–538, and 539–638; these read PTGV…NIDV, SAAF…VKEP, PVLI…VEEK, QLEV…KQEP, and PKIH…VVDV. Fibronectin type-III domains lie at 641–737 and 739–834; these read PPEA…IAPT and EPLH…IREI. The Ig-like C2-type 6 domain maps to 838 to 932; the sequence is PKIRLPRHLR…ATIRIRVVEK (95 aa). The Fibronectin type-III 3 domain occupies 935–1030; sequence PPINVMVKEV…SKNTARILKT (96 aa). One can recognise an Ig-like C2-type 7 domain in the interval 1048–1141; sequence PKFLTPLIDR…ECKLEVRVPQ (94 aa).

It belongs to the immunoglobulin superfamily. MyBP family.

Its function is as follows. Thick filament-associated protein located in the crossbridge region of vertebrate striated muscle a bands. In vitro it binds MHC, F-actin and native thin filaments, and modifies the activity of actin-activated myosin ATPase. It may modulate muscle contraction or may play a more structural role. The chain is Myosin-binding protein C, fast-type (MYBPC2) from Homo sapiens (Human).